A 188-amino-acid chain; its full sequence is Multiple organellar RNA editing factor 7, mitochondrial (188 aa).

A mitochondrion-targeting transit peptide spans 1–20 (MARIIRRPLNLTAAVRFRLS). The interval 169–188 (DAKSGVVKKKHRRKRKKKLI) is disordered. Positions 174-188 (VVKKKHRRKRKKKLI) are enriched in basic residues.

Belongs to the MORF family. Heterodimers with MORF8/RIP1, MORF5/RIP5 and MORF6/RIP6.

It is found in the mitochondrion. Involved in organellar RNA editing. Required for the processing of few RNA editing sites in mitochondria. This chain is Multiple organellar RNA editing factor 7, mitochondrial, found in Arabidopsis thaliana (Mouse-ear cress).